The primary structure comprises 716 residues: Astellifadiene synthase (716 aa).

The tract at residues M1–F323 is terpene cyclase. A Mg(2+)-binding site is contributed by D92. Substrate contacts are provided by residues D92, R179–D182, N223, S227–E231, and R316–Y317. Positions D92–D96 match the DDXXD 1 motif. Positions N223–E231 match the NSE/DTE motif. The segment at S324–L713 is prenyltransferase. Isopentenyl diphosphate is bound by residues K436, R439, and H468. D475 and D479 together coordinate Mg(2+). The DDXXD 2 motif lies at D475–D479. R484 contacts dimethylallyl diphosphate. R485 lines the isopentenyl diphosphate pocket. Dimethylallyl diphosphate-binding residues include K562, T563, Q598, N605, K615, and K625.

This sequence in the N-terminal section; belongs to the terpene synthase family. The protein in the C-terminal section; belongs to the FPP/GGPP synthase family. Hexamer. Requires Mg(2+) as cofactor.

It catalyses the reaction isopentenyl diphosphate + (2E,6E)-farnesyl diphosphate = (2E,6E,10E)-geranylgeranyl diphosphate + diphosphate. It carries out the reaction isopentenyl diphosphate + (2E,6E,10E)-geranylgeranyl diphosphate = (2E,6E,10E,14E)-geranylfarnesyl diphosphate + diphosphate. The enzyme catalyses (2E,6E,10E,14E)-geranylfarnesyl diphosphate = astellifadiene + diphosphate. Its pathway is secondary metabolite biosynthesis; terpenoid biosynthesis. Functionally, bifunctional terpene synthase that converts dimethylallyl diphosphate (DMAPP) and isopentenyl diphosphate (IPP) into astellifadiene. The C-terminal prenyltransferase (PT) domain of EvAS catalyzes formation of geranylfarnesyl pyrophosphate (GFPP), whereas the N-terminal terpene cyclase (TC) domain catalyzes the cyclization of GFPP to astellifadiene. The polypeptide is Astellifadiene synthase (Emericella variicolor (Aspergillus stellatus)).